A 228-amino-acid chain; its full sequence is 2-C-methyl-D-erythritol 4-phosphate cytidylyltransferase (228 aa).

Belongs to the IspD/TarI cytidylyltransferase family. IspD subfamily.

The enzyme catalyses 2-C-methyl-D-erythritol 4-phosphate + CTP + H(+) = 4-CDP-2-C-methyl-D-erythritol + diphosphate. The protein operates within isoprenoid biosynthesis; isopentenyl diphosphate biosynthesis via DXP pathway; isopentenyl diphosphate from 1-deoxy-D-xylulose 5-phosphate: step 2/6. In terms of biological role, catalyzes the formation of 4-diphosphocytidyl-2-C-methyl-D-erythritol from CTP and 2-C-methyl-D-erythritol 4-phosphate (MEP). The protein is 2-C-methyl-D-erythritol 4-phosphate cytidylyltransferase of Geobacillus thermodenitrificans (strain NG80-2).